We begin with the raw amino-acid sequence, 480 residues long: V-type ATP synthase beta chain 2 (480 aa).

The protein belongs to the ATPase alpha/beta chains family.

Its function is as follows. Produces ATP from ADP in the presence of a proton gradient across the membrane. The V-type beta chain is a regulatory subunit. In Treponema pallidum (strain Nichols), this protein is V-type ATP synthase beta chain 2 (atpB2).